A 320-amino-acid chain; its full sequence is Nucleoporin Nup37 (320 aa).

WD repeat units lie at residues 67-113 (KEQR…FTSL), 118-157 (GHGD…ENVI), 160-200 (GLSS…TVIS), and 203-242 (SPKF…VPAD).

It localises to the nucleus. Its subcellular location is the nuclear pore complex. As part of the nuclear pore complex (NPC), has a role in its assembly and function. Functionally, (Microbial infection) Required for optimal replication of E.chaffeensis. The polypeptide is Nucleoporin Nup37 (Drosophila melanogaster (Fruit fly)).